A 715-amino-acid polypeptide reads, in one-letter code: Protein DENND6 homolog (715 aa).

Residues 13–58 are a coiled coil; it reads MIFKEEEIKKQQILLEKEEKEKQEQQQKKLNKDNIFKLEEEGKKLE. Residues 96–273 enclose the uDENN domain; it reads NSFCIINFDL…VKQHQLGGGS (178 aa). Disordered regions lie at residues 269-296 and 392-416; these read LGGG…SNTT and SGTR…NNNN. Residues 299–476 enclose the cDENN domain; it reads SPSIWSEMKL…KDLLTRHVLD (178 aa). The segment covering 399 to 416 has biased composition (low complexity); sequence SNNNNNQDDSEYNNNNNN. The dDENN domain occupies 478–600; it reads KEKILSEYKP…KQWLDDKRAQ (123 aa).

Belongs to the DENND6 family.

The chain is Protein DENND6 homolog from Dictyostelium discoideum (Social amoeba).